The chain runs to 540 residues: 2,3-bisphosphoglycerate-independent phosphoglycerate mutase (540 aa).

Mn(2+) contacts are provided by D24 and S74. S74 serves as the catalytic Phosphoserine intermediate. Substrate-binding positions include H135, 165-166 (RD), R197, R203, 268-271 (RPDR), and K341. D408, H412, D449, H450, and H467 together coordinate Mn(2+).

Belongs to the BPG-independent phosphoglycerate mutase family. Monomer. Mn(2+) serves as cofactor.

It carries out the reaction (2R)-2-phosphoglycerate = (2R)-3-phosphoglycerate. Its pathway is carbohydrate degradation; glycolysis; pyruvate from D-glyceraldehyde 3-phosphate: step 3/5. Functionally, catalyzes the interconversion of 2-phosphoglycerate and 3-phosphoglycerate. This is 2,3-bisphosphoglycerate-independent phosphoglycerate mutase from Prochlorococcus marinus (strain MIT 9303).